The primary structure comprises 550 residues: Acetyl-coenzyme A transporter 1 (550 aa).

Residues 1 to 74 (MSPTISHKDN…KRSYRAELSS (74 aa)) lie on the Cytoplasmic side of the membrane. Position 42 is a phosphoserine (Ser42). Residues 75-95 (ILLLLFLYVLQGIPLGLAGSI) traverse the membrane as a helical segment. Topologically, residues 96–113 (PLILQSKNVSYTDQAFFS) are extracellular. Asn103 carries an N-linked (GlcNAc...) asparagine glycan. Residues 114–134 (FVFWPFSLKLLWAPLVDAVYF) traverse the membrane as a helical segment. Residues 135–141 (KNFGRRK) lie on the Cytoplasmic side of the membrane. Residues 142 to 162 (SWLVPTQYILGIFMIYLSTQV) form a helical membrane-spanning segment. Residues 163–256 (DRLLGNIDGR…FQPQPRGIVT (94 aa)) are Extracellular-facing. Residues 257 to 277 (LSDFLFFWGTVFLITTTLVAL) form a helical membrane-spanning segment. Topologically, residues 278–300 (LKKETREASVVKEETQGITDTYK) are cytoplasmic. A helical membrane pass occupies residues 301-321 (LLFSIIKMPAVLAFCLLILTS). Residues 322 to 344 (KIGFSAADAVTGLKLVEEGVPKE) are Extracellular-facing. A helical membrane pass occupies residues 345-365 (HLALLAVPMVPLQIILPLLIS). Over 366-375 (KYTAGPQPLN) the chain is Cytoplasmic. A helical transmembrane segment spans residues 376–396 (IFYKAMPYRLLLGLEYALLVW). Residues 397-405 (WTPKVEHQG) lie on the Extracellular side of the membrane. A helical transmembrane segment spans residues 406–426 (GFPIYYYIIVLLSYALHQVTL). Residues 427–509 (YSMYVSIMAF…LGGSCVTALD (83 aa)) are Cytoplasmic-facing. A helical membrane pass occupies residues 510-530 (GYYVESIVCVLIGFGWWFFLG). The Extracellular segment spans residues 531-550 (PKFKKLQDEGPSSWKCKRTN).

This sequence belongs to the SLC33A transporter family. Homodimerizes. In terms of tissue distribution, expressed in brain at all developmental stages. Detected in hippocampus, hypothalamus, cerebellum, cortex, olfactory bulb, and the ventral and dorsal anterior olfactory nucleus.

The protein localises to the endoplasmic reticulum membrane. It carries out the reaction acetyl-CoA(in) = acetyl-CoA(out). Its function is as follows. Acetyl-CoA transporter that mediates active acetyl-CoA import through the endoplasmic reticulum (ER) membrane into the ER lumen where specific ER-based acetyl-CoA:lysine acetyltransferases are responsible for the acetylation of ER-based protein substrates, such as BACE1. Necessary for O-acetylation of gangliosides. The chain is Acetyl-coenzyme A transporter 1 (Slc33a1) from Rattus norvegicus (Rat).